Here is a 272-residue protein sequence, read N- to C-terminus: Phosphate import ATP-binding protein PstB (272 aa).

One can recognise an ABC transporter domain in the interval 26–267; that stretch reads LEIRNLDLSY…PRKRKTEDYI (242 aa). Residue 58-65 coordinates ATP; the sequence is GPSGCGKS.

Belongs to the ABC transporter superfamily. Phosphate importer (TC 3.A.1.7) family. In terms of assembly, the complex is composed of two ATP-binding proteins (PstB), two transmembrane proteins (PstC and PstA) and a solute-binding protein (PstS).

It localises to the cell inner membrane. It carries out the reaction phosphate(out) + ATP + H2O = ADP + 2 phosphate(in) + H(+). Part of the ABC transporter complex PstSACB involved in phosphate import. Responsible for energy coupling to the transport system. In Shewanella denitrificans (strain OS217 / ATCC BAA-1090 / DSM 15013), this protein is Phosphate import ATP-binding protein PstB.